We begin with the raw amino-acid sequence, 319 residues long: MKNNYTSLKSPIDEGDESKTGHEIDLEKGLLPEYDSEEEGALPPYSDHARVSNSPNTHRENNPSRSTDNSSPFLIKLLISFTPIYVLNVLAICYLKYKDAFFKNYGAAEWTLFGFWCLVCTLALIFLTYFYETWTKAVKVTAVGLYNSRKKWVVIIWLLWVVICFVLFGCIKFGNLNLDKALICSTCSISAALLLFLLYVRLPFWTLKHMFSGLFQVLGVQSCVVIVTKGLMYLFDKHIDATGYEIEATSLFVIGNFFFFYEMECPGALKRMPKFIRNGIASFLEGIGNAIGRIGNAFRGANDNNNNIPLEETEAESEV.

2 disordered regions span residues 1 to 22 (MKNN…KTGH) and 35 to 68 (DSEE…RSTD). The next 6 membrane-spanning stretches (helical) occupy residues 73-93 (FLIK…LAIC), 110-130 (WTLF…LTYF), 153-173 (VVII…CIKF), 187-207 (CSIS…FWTL), 215-235 (FQVL…MYLF), and 241-261 (ATGY…FFFY).

This sequence belongs to the WTF family. As to quaternary structure, homomer. Interacts with other proteins that exhibit high sequence similarity.

It is found in the spore membrane. The protein resides in the vacuole membrane. In terms of biological role, acts as a suppressor component of the dual wtf meiotic drive system, and can suppress but not confer meiotic drive by compatible poisons. Wtf meiotic drive systems promote unequal transmission of alleles from the parental zygote to progeny spores by encoding a poison and an antidote from the same locus; the poison is trans-acting and forms toxic aggregates in all spores within an ascus, wherease the antidote is spore-specific and targets aggregates for degradation by the vacuole. Meiotic drive by wtf systems therefore lead to poisoning of all progeny that do not inherit the dual poison/antidote allele, or express a compatible antidote. The sequence is that of Meiotic drive suppressor wtf16 from Schizosaccharomyces pombe (strain 972 / ATCC 24843) (Fission yeast).